Reading from the N-terminus, the 142-residue chain is Large ribosomal subunit protein uL13 (142 aa).

The protein belongs to the universal ribosomal protein uL13 family. Part of the 50S ribosomal subunit.

Its function is as follows. This protein is one of the early assembly proteins of the 50S ribosomal subunit, although it is not seen to bind rRNA by itself. It is important during the early stages of 50S assembly. This is Large ribosomal subunit protein uL13 from Leptothrix cholodnii (strain ATCC 51168 / LMG 8142 / SP-6) (Leptothrix discophora (strain SP-6)).